The chain runs to 637 residues: Poly [ADP-ribose] polymerase 2 (637 aa).

The DNA-binding element occupies 1–140 (MANKLKVDEL…KKEEKIVTAT (140 aa)). The SAP 1 domain maps to 2 to 36 (ANKLKVDELRLKLAERGLSTTGVKAVLVERLEEAI). Positions 35 to 46 (AIAEDTKKEESK) are enriched in basic and acidic residues. The disordered stretch occupies residues 35-56 (AIAEDTKKEESKSKRKRNSSND). The short motif at 41–62 (KKEESKSKRKRNSSNDTYESNK) is the Nuclear localization signal element. One can recognise an SAP 2 domain in the interval 69-103 (FRGMIVKELREEAIKRGLDTTGTKKDLLERLCNDA). A compositionally biased stretch (polar residues) spans 106–117 (VSNAPVKSSNGT). Residues 106-134 (VSNAPVKSSNGTDEAEDDNNGFEEEKKEE) form a disordered region. The segment covering 118-127 (DEAEDDNNGF) has biased composition (acidic residues). One can recognise a WGR domain in the interval 158–255 (QYHVLQRGDD…KEFIPHPKSY (98 aa)). The PARP alpha-helical domain maps to 286–404 (QSKLDTRVAK…EIELATKLLS (119 aa)). The PARP catalytic domain occupies 412–637 (DPLYYHYQQL…VIQVKFNYKH (226 aa)).

This sequence belongs to the ARTD/PARP family.

Its subcellular location is the nucleus. The catalysed reaction is NAD(+) + (ADP-D-ribosyl)n-acceptor = nicotinamide + (ADP-D-ribosyl)n+1-acceptor + H(+).. It carries out the reaction L-aspartyl-[protein] + NAD(+) = 4-O-(ADP-D-ribosyl)-L-aspartyl-[protein] + nicotinamide. The enzyme catalyses L-glutamyl-[protein] + NAD(+) = 5-O-(ADP-D-ribosyl)-L-glutamyl-[protein] + nicotinamide. Its function is as follows. Involved in the base excision repair (BER) pathway, by catalyzing the poly(ADP-ribosyl)ation of a limited number of acceptor proteins involved in chromatin architecture and in DNA metabolism. This modification follows DNA damages and appears as an obligatory step in a detection/signaling pathway leading to the reparation of DNA strand breaks. The chain is Poly [ADP-ribose] polymerase 2 (PARP2) from Arabidopsis thaliana (Mouse-ear cress).